A 340-amino-acid chain; its full sequence is Cytosolic Fe-S cluster assembly factor NBP35 (340 aa).

4 residues coordinate [4Fe-4S] cluster: C31, C45, C48, and C54. Residue 84 to 91 (GKGGVGKS) participates in ATP binding. Positions 257 and 260 each coordinate [4Fe-4S] cluster.

It belongs to the Mrp/NBP35 ATP-binding proteins family. NUBP1/NBP35 subfamily. As to quaternary structure, heterotetramer of 2 NBP35 and 2 CFD1 chains. Requires [4Fe-4S] cluster as cofactor.

It localises to the cytoplasm. Its function is as follows. Component of the cytosolic iron-sulfur (Fe/S) protein assembly (CIA) machinery. Required for maturation of extramitochondrial Fe-S proteins. The NBP35-CFD1 heterotetramer forms a Fe-S scaffold complex, mediating the de novo assembly of an Fe-S cluster and its transfer to target apoproteins. This is Cytosolic Fe-S cluster assembly factor NBP35 from Phaeosphaeria nodorum (strain SN15 / ATCC MYA-4574 / FGSC 10173) (Glume blotch fungus).